The sequence spans 156 residues: Large ribosomal subunit protein bL17 (156 aa).

Residues 127–156 (RATRAAASKKAAEEKAAEAAEEKDEAAEEK) form a disordered region. Residues 136 to 146 (KAAEEKAAEAA) show a composition bias toward basic and acidic residues. The segment covering 147 to 156 (EEKDEAAEEK) has biased composition (acidic residues).

The protein belongs to the bacterial ribosomal protein bL17 family. Part of the 50S ribosomal subunit. Contacts protein L32.

In Corynebacterium urealyticum (strain ATCC 43042 / DSM 7109), this protein is Large ribosomal subunit protein bL17.